Consider the following 167-residue polypeptide: Phospholipase A2 imperatoxin-1 (167 aa).

Residues W38, G40, and G42 each coordinate Ca(2+). 5 cysteine pairs are disulfide-bonded: C39-C61, C60-C99, C67-C92, C90-C127, and C132-C144. The active site involves H64. Residue D65 coordinates Ca(2+). The N-linked (GlcNAc...) asparagine glycan is linked to N102. The propeptide occupies 136 to 140 (RRLAR).

Belongs to the phospholipase A2 family. Group III subfamily. In terms of assembly, heterodimer composed of a large subunit and a small subunit; disulfide-linked. Ca(2+) serves as cofactor. As to expression, expressed by the venom gland.

Its subcellular location is the secreted. It carries out the reaction a 1,2-diacyl-sn-glycero-3-phosphocholine + H2O = a 1-acyl-sn-glycero-3-phosphocholine + a fatty acid + H(+). Phospholipase toxin, which may catalyze the calcium-dependent hydrolysis of the 2-acyl groups in 3-sn-phosphoglycerides. Inhibits both skeletal (RYR1) and cardiac (RYR2) ryanodine receptors (calcium release channels). Probably blocks ryanodine receptors by generating a lipid product. The polypeptide is Phospholipase A2 imperatoxin-1 (Pandinus imperator (Emperor scorpion)).